The chain runs to 162 residues: SsrA-binding protein (162 aa).

Belongs to the SmpB family.

It is found in the cytoplasm. Required for rescue of stalled ribosomes mediated by trans-translation. Binds to transfer-messenger RNA (tmRNA), required for stable association of tmRNA with ribosomes. tmRNA and SmpB together mimic tRNA shape, replacing the anticodon stem-loop with SmpB. tmRNA is encoded by the ssrA gene; the 2 termini fold to resemble tRNA(Ala) and it encodes a 'tag peptide', a short internal open reading frame. During trans-translation Ala-aminoacylated tmRNA acts like a tRNA, entering the A-site of stalled ribosomes, displacing the stalled mRNA. The ribosome then switches to translate the ORF on the tmRNA; the nascent peptide is terminated with the 'tag peptide' encoded by the tmRNA and targeted for degradation. The ribosome is freed to recommence translation, which seems to be the essential function of trans-translation. The protein is SsrA-binding protein of Buchnera aphidicola subsp. Acyrthosiphon pisum (strain 5A).